Consider the following 167-residue polypeptide: Insertion element IS1 1 protein InsB (167 aa).

The protein belongs to the transposase 27 family.

Absolutely required for transposition of IS1. This chain is Insertion element IS1 1 protein InsB (insB1), found in Escherichia coli (strain K12).